The sequence spans 348 residues: Dihydroorotase (348 aa).

The Zn(2+) site is built by His17 and His19. Residues 19–21 (HLR) and Asn45 each bind substrate. Residues Lys103, His140, and His178 each coordinate Zn(2+). Lys103 is subject to N6-carboxylysine. Substrate is bound at residue His140. Leu223 serves as a coordination point for substrate. Asp251 is a Zn(2+) binding site. The active site involves Asp251. Residues His255 and Ala267 each contribute to the substrate site.

This sequence belongs to the metallo-dependent hydrolases superfamily. DHOase family. Class II DHOase subfamily. In terms of assembly, homodimer. Zn(2+) is required as a cofactor.

It carries out the reaction (S)-dihydroorotate + H2O = N-carbamoyl-L-aspartate + H(+). The protein operates within pyrimidine metabolism; UMP biosynthesis via de novo pathway; (S)-dihydroorotate from bicarbonate: step 3/3. Functionally, catalyzes the reversible cyclization of carbamoyl aspartate to dihydroorotate. This chain is Dihydroorotase, found in Edwardsiella ictaluri (strain 93-146).